Here is a 301-residue protein sequence, read N- to C-terminus: Sulfate adenylyltransferase subunit 2 (301 aa).

Residues 279–301 are disordered; sequence RQGRLIDHDQDGSMEKKKQEGYF.

This sequence belongs to the PAPS reductase family. CysD subfamily. As to quaternary structure, heterodimer composed of CysD, the smaller subunit, and CysN.

It catalyses the reaction sulfate + ATP + H(+) = adenosine 5'-phosphosulfate + diphosphate. Its pathway is sulfur metabolism; hydrogen sulfide biosynthesis; sulfite from sulfate: step 1/3. Its function is as follows. With CysN forms the ATP sulfurylase (ATPS) that catalyzes the adenylation of sulfate producing adenosine 5'-phosphosulfate (APS) and diphosphate, the first enzymatic step in sulfur assimilation pathway. APS synthesis involves the formation of a high-energy phosphoric-sulfuric acid anhydride bond driven by GTP hydrolysis by CysN coupled to ATP hydrolysis by CysD. This Geotalea uraniireducens (strain Rf4) (Geobacter uraniireducens) protein is Sulfate adenylyltransferase subunit 2.